We begin with the raw amino-acid sequence, 76 residues long: MCVQTRMLVAVAVVLVVLAVLSDPVSAGYRKPPFNGSIFGKRAGGDSLYEPGKALASACQVAVEACAAWFPGPEKK.

Residues 1-27 (MCVQTRMLVAVAVVLVVLAVLSDPVSA) form the signal peptide. Phe-39 is subject to Phenylalanine amide.

This sequence belongs to the FARP (FMRFamide related peptide) family. Olfactory lobe and accessory lobe, olfactory globular tract, olfactory lobe cells (at protein level). Widely distributed throughout nervous system.

It is found in the secreted. GYRKPPFNGSIF-amide may be involved in olfaction and contraction of hindgut. The sequence is that of FMRFamide-related neuropeptides from Procambarus clarkii (Red swamp crayfish).